Consider the following 376-residue polypeptide: Chaperone protein DnaJ (376 aa).

The 66-residue stretch at 5 to 70 folds into the J domain; it reads DFYEVLGVGR…DKKAAYDQFG (66 aa). A CR-type zinc finger spans residues 132 to 210; the sequence is GLSKELRIPT…CHGEGRVEKS (79 aa). Residues Cys145, Cys148, Cys162, Cys165, Cys184, Cys187, Cys198, and Cys201 each coordinate Zn(2+). CXXCXGXG motif repeat units lie at residues 145-152, 162-169, 184-191, and 198-205; these read CEPCDGSG, CGTCHGQG, CPTCHGRG, and CNKCHGEG.

This sequence belongs to the DnaJ family. As to quaternary structure, homodimer. Requires Zn(2+) as cofactor.

The protein localises to the cytoplasm. In terms of biological role, participates actively in the response to hyperosmotic and heat shock by preventing the aggregation of stress-denatured proteins and by disaggregating proteins, also in an autonomous, DnaK-independent fashion. Unfolded proteins bind initially to DnaJ; upon interaction with the DnaJ-bound protein, DnaK hydrolyzes its bound ATP, resulting in the formation of a stable complex. GrpE releases ADP from DnaK; ATP binding to DnaK triggers the release of the substrate protein, thus completing the reaction cycle. Several rounds of ATP-dependent interactions between DnaJ, DnaK and GrpE are required for fully efficient folding. Also involved, together with DnaK and GrpE, in the DNA replication of plasmids through activation of initiation proteins. The sequence is that of Chaperone protein DnaJ from Shewanella piezotolerans (strain WP3 / JCM 13877).